A 439-amino-acid chain; its full sequence is Serine hydroxymethyltransferase (439 aa).

(6S)-5,6,7,8-tetrahydrofolate is bound by residues leucine 134 and 138–140 (GHL). An N6-(pyridoxal phosphate)lysine modification is found at lysine 243.

Belongs to the SHMT family. As to quaternary structure, homodimer. The cofactor is pyridoxal 5'-phosphate.

The protein resides in the cytoplasm. It catalyses the reaction (6R)-5,10-methylene-5,6,7,8-tetrahydrofolate + glycine + H2O = (6S)-5,6,7,8-tetrahydrofolate + L-serine. Its pathway is one-carbon metabolism; tetrahydrofolate interconversion. The protein operates within amino-acid biosynthesis; glycine biosynthesis; glycine from L-serine: step 1/1. Catalyzes the reversible interconversion of serine and glycine with tetrahydrofolate (THF) serving as the one-carbon carrier. This reaction serves as the major source of one-carbon groups required for the biosynthesis of purines, thymidylate, methionine, and other important biomolecules. Also exhibits THF-independent aldolase activity toward beta-hydroxyamino acids, producing glycine and aldehydes, via a retro-aldol mechanism. The polypeptide is Serine hydroxymethyltransferase (Brucella anthropi (strain ATCC 49188 / DSM 6882 / CCUG 24695 / JCM 21032 / LMG 3331 / NBRC 15819 / NCTC 12168 / Alc 37) (Ochrobactrum anthropi)).